The primary structure comprises 505 residues: Retinoic acid receptor gamma (505 aa).

Disordered stretches follow at residues 1 to 57 and 113 to 134; these read MMKF…SSKD and SLSV…PSPP. Basic and acidic residues-rich tracts occupy residues 12–22 and 32–46; these read DGGERPEEEGK and MGKE…KEEA. The segment at 52 to 142 is modulating; sequence MSSSKDRICS…PPPPPRVYKP (91 aa). Over residues 115–124 the composition is skewed to polar residues; that stretch reads SVETQSTSSE. 2 NR C4-type zinc fingers span residues 143 to 163 and 179 to 203; these read CFVC…CEGC and CHRD…LQKC. The segment at residues 143–208 is a DNA-binding region (nuclear receptor); the sequence is CFVCNDKSSG…RLQKCFEVGM (66 aa). Positions 209–237 are hinge; the sequence is SKEAVRNDRNKKKKEIKEEVVTDSYEMPP. The NR LBD domain occupies 238 to 472; the sequence is EMEALIQKVS…PLIREMLENP (235 aa). Residues 462–505 are disordered; sequence PPLIREMLENPEAFEDDASPPPKSEQKPIKVEEKPGEKTSTKDP. Basic and acidic residues predominate over residues 485–505; that stretch reads SEQKPIKVEEKPGEKTSTKDP.

It belongs to the nuclear hormone receptor family. NR1 subfamily. Heterodimer; with a RXR molecule. Binds DNA preferentially as a RAR/RXR heterodimer. As to expression, isoform Delta-1A and Isoform Delta-1B are most abundant in regenerating limbs, tails, and the anterior half of the lower jaw. Isoform Delta-2 is broadly and uniformly distributed.

The protein resides in the nucleus. Its function is as follows. Receptor for retinoic acid. Retinoic acid receptors bind as heterodimers to their target response elements in response to their ligands, all-trans or 9-cis retinoic acid, and regulate gene expression in various biological processes. The RAR/RXR heterodimers bind to the retinoic acid response elements (RARE) composed of tandem 5'-AGGTCA-3' sites known as DR1-DR5. The protein is Retinoic acid receptor gamma (RARG) of Notophthalmus viridescens (Eastern newt).